A 119-amino-acid chain; its full sequence is Large ribosomal subunit protein uL18 (119 aa).

Belongs to the universal ribosomal protein uL18 family. As to quaternary structure, part of the 50S ribosomal subunit; part of the 5S rRNA/L5/L18/L25 subcomplex. Contacts the 5S and 23S rRNAs.

In terms of biological role, this is one of the proteins that bind and probably mediate the attachment of the 5S RNA into the large ribosomal subunit, where it forms part of the central protuberance. The protein is Large ribosomal subunit protein uL18 of Nitratidesulfovibrio vulgaris (strain DSM 19637 / Miyazaki F) (Desulfovibrio vulgaris).